The sequence spans 605 residues: Lysophospholipase 1 (605 aa).

Residues 1–17 (MILHHLLILLIINYCVA) form the signal peptide. In terms of domain architecture, PLA2c spans 30-565 (SCPSSQLIRS…ENYCWDGTIY (536 aa)). N-linked (GlcNAc...) asparagine glycosylation is found at Asn199, Asn261, Asn399, Asn451, Asn465, Asn492, and Asn573.

The protein belongs to the lysophospholipase family.

The protein resides in the secreted. It carries out the reaction a 1-acyl-sn-glycero-3-phosphocholine + H2O = sn-glycerol 3-phosphocholine + a fatty acid + H(+). Catalyzes the release of fatty acids from lysophospholipids. Phospholipase B may well contribute to pathogenicity by abetting the fungus in damaging and traversing host cell membranes, processes which likely increase the rapidity of disseminated infection. This Candida albicans (strain SC5314 / ATCC MYA-2876) (Yeast) protein is Lysophospholipase 1.